We begin with the raw amino-acid sequence, 34 residues long: Photosystem II reaction center protein Y (34 aa).

At 1-5 the chain is on the lumenal side; the sequence is DWRVL. A helical membrane pass occupies residues 6 to 22; the sequence is VVLLPVLLAAGWAVRNI. Residues 23–34 lie on the Cytoplasmic side of the membrane; sequence LPYAVKQVQKLL.

It belongs to the PsbY family. In terms of assembly, PSII is composed of 1 copy each of membrane proteins PsbA, PsbB, PsbC, PsbD, PsbE, PsbF, PsbH, PsbI, PsbJ, PsbK, PsbL, PsbM, PsbT, PsbX, PsbY, PsbZ, Psb30/Ycf12, peripheral proteins PsbO, CyanoQ (PsbQ), PsbU, PsbV and a large number of cofactors. It forms dimeric complexes. This protein is only loosely associated with PSII, and is not often found in crystals. It depends on PSII binds multiple chlorophylls, carotenoids and specific lipids. as a cofactor.

The protein resides in the cellular thylakoid membrane. Functionally, loosely associated component of the core of photosystem II (PSII). PSII is a light-driven water plastoquinone oxidoreductase, using light energy to abstract electrons from H(2)O, generating a proton gradient subsequently used for ATP formation. This chain is Photosystem II reaction center protein Y, found in Thermostichus vulcanus (Synechococcus vulcanus).